The sequence spans 419 residues: Serine--tRNA ligase (419 aa).

Threonine 225–glutamate 227 contacts L-serine. Arginine 256–glutamate 258 lines the ATP pocket. An L-serine-binding site is contributed by glutamate 279. Glutamate 343 to serine 346 provides a ligand contact to ATP. Serine 378 contacts L-serine.

Belongs to the class-II aminoacyl-tRNA synthetase family. Type-1 seryl-tRNA synthetase subfamily. In terms of assembly, homodimer. The tRNA molecule binds across the dimer.

It localises to the cytoplasm. The catalysed reaction is tRNA(Ser) + L-serine + ATP = L-seryl-tRNA(Ser) + AMP + diphosphate + H(+). It catalyses the reaction tRNA(Sec) + L-serine + ATP = L-seryl-tRNA(Sec) + AMP + diphosphate + H(+). It participates in aminoacyl-tRNA biosynthesis; selenocysteinyl-tRNA(Sec) biosynthesis; L-seryl-tRNA(Sec) from L-serine and tRNA(Sec): step 1/1. Functionally, catalyzes the attachment of serine to tRNA(Ser). Is also able to aminoacylate tRNA(Sec) with serine, to form the misacylated tRNA L-seryl-tRNA(Sec), which will be further converted into selenocysteinyl-tRNA(Sec). The polypeptide is Serine--tRNA ligase (Pelagibacter ubique (strain HTCC1062)).